Consider the following 526-residue polypeptide: Delayed-rectifier potassium channel regulatory subunit KCNS1 (526 aa).

The Cytoplasmic segment spans residues 1 to 217; sequence MLMLLVRGTH…LTMENPGYSL (217 aa). The helical transmembrane segment at 218–239 threads the bilayer; that stretch reads PSKLFSCVSISVVLASIAAMCI. The Extracellular segment spans residues 240 to 270; sequence HSLPEYQAREAAAAVAAVAAGRSPEGVRDDP. The helical transmembrane segment at 271–293 threads the bilayer; the sequence is VLRRLEYFCIAWFSFEVSSRLLL. The Cytoplasmic segment spans residues 294–304; sequence APSTRNFFCHP. A helical transmembrane segment spans residues 305-322; that stretch reads LNLIDIVSVLPFYLTLLA. Over 323-337 the chain is Extracellular; it reads GVALGDQGGKEFGHL. The helical; Voltage-sensor transmembrane segment at 338-358 threads the bilayer; sequence GKVVQVFRLMRIFRVLKLARH. Over 359-373 the chain is Cytoplasmic; that stretch reads STGLRSLGATLKHSY. The helical transmembrane segment at 374-395 threads the bilayer; sequence REVGILLLYLAVGVSVFSGVAY. Over 396-408 the chain is Extracellular; it reads TAEKEEDVGFNTI. The helical intramembrane region spans 409-420; that stretch reads PACWWWGTVSMT. The Selectivity filter motif lies at 421 to 426; it reads TVGYGD. Residues 421–428 lie within the membrane without spanning it; the sequence is TVGYGDVV. At 429-435 the chain is on the extracellular side; sequence PVTVAGK. Residues 436–464 traverse the membrane as a helical segment; that stretch reads LAASGCILGGILVVALPITIIFNKFSHFY. Over 465–526 the chain is Cytoplasmic; that stretch reads RRQKALEAAV…PSEPPHPQMY (62 aa). The segment at 491 to 526 is disordered; sequence GVSEASLETSRETSQEGRSADLESQAPSEPPHPQMY. Residues 499–511 show a composition bias toward basic and acidic residues; the sequence is TSRETSQEGRSAD.

This sequence belongs to the potassium channel family. S (TC 1.A.1.2) subfamily. Kv9.1/KCNS1 sub-subfamily. Heterotetramer with KCNB1. Heterotetramer with KCNB2. Does not form homomultimers.

Its subcellular location is the cell membrane. Its function is as follows. Potassium channel regulatory subunit that modulate the delayed rectifier voltage-gated potassium channel activity of KCNB1 and KCNB2 by altering their kinetics, expression levels, and shifting the half-inactivation potential to more polarized values. While it does not form functional channels on its own, it can form functional heterotetrameric channels with KCNB1 and KCNB2. Each regulatory subunit has unique regulatory properties that can lead to extensive inhibition, significant changes in kinetics, and/or substantial shifts in the voltage dependencies of the inactivation process. This Pan troglodytes (Chimpanzee) protein is Delayed-rectifier potassium channel regulatory subunit KCNS1.